A 224-amino-acid polypeptide reads, in one-letter code: Paired immunoglobulin-like type 2 receptor beta (224 aa).

Residues 1–28 (MALLISLPGGTPAMAQVLLLLSSGCLHA) form the signal peptide. The Extracellular segment spans residues 29-195 (GNSERYNRKN…NPSLMNLGAM (167 aa)). N-linked (GlcNAc...) asparagine glycosylation is found at Asn90, Asn107, and Asn154. Residues 196–216 (VTMLLAKVLVIVLVYGWMIFL) traverse the membrane as a helical segment. Over 217–224 (RWKQRPAH) the chain is Cytoplasmic.

As to quaternary structure, interacts with CD99. Probably associates with DAP12. As to expression, widely expressed with highest levels in spleen, liver and lung. Predominantly expressed by natural killer cells, macrophages, and granulocytes and dendritic cells (BM-DC).

It is found in the membrane. Paired receptors consist of highly related activating and inhibitory receptors and are widely involved in the regulation of the immune system. PILRB is thought to act as a cellular signaling activating receptor that associates with ITAM-bearing adapter molecules on the cell surface. Seems to associate with DAP12 and is a receptor for CD99. May be involved in target cell recognition by natural killer cells and in activation of dendritic cells. The chain is Paired immunoglobulin-like type 2 receptor beta (Pilrb) from Mus musculus (Mouse).